We begin with the raw amino-acid sequence, 98 residues long: Integration host factor subunit beta (98 aa).

The segment at arginine 59 to glycine 98 is disordered. Residues proline 82–asparagine 91 are compositionally biased toward basic and acidic residues.

Belongs to the bacterial histone-like protein family. Heterodimer of an alpha and a beta chain.

This protein is one of the two subunits of integration host factor, a specific DNA-binding protein that functions in genetic recombination as well as in transcriptional and translational control. The polypeptide is Integration host factor subunit beta (Saccharophagus degradans (strain 2-40 / ATCC 43961 / DSM 17024)).